The following is a 609-amino-acid chain: Alpha-glucosides permease MPH2 (609 aa).

Over 1 to 106 (MKNLSFLINR…AAAWSLLVST (106 aa)) the chain is Cytoplasmic. The helical transmembrane segment at 107–127 (TLIMEGYDTAILGAFYALPIF) threads the bilayer. Residues 128-142 (QRKFGSQNDKTGEWE) are Extracellular-facing. A helical membrane pass occupies residues 143–163 (ISASWQIGLTLCYMAGEIVGL). Topologically, residues 164–178 (QLTGPSVDLVGNRYT) are cytoplasmic. The chain crosses the membrane as a helical span at residues 179–199 (LIIALFFLAAFTFILYFCNSL). Position 200 (Gly-200) is a topological domain, extracellular. A helical transmembrane segment spans residues 201–221 (MIAVGQALCGMPWGCFQCLTV). The Cytoplasmic segment spans residues 222 to 234 (SYASEICPLALRY). The chain crosses the membrane as a helical span at residues 235–255 (YLTTYSNLCWLFGQLFAAGIM). Residues 256–270 (KNSQKKYADSELGYK) lie on the Extracellular side of the membrane. The helical transmembrane segment at 271–291 (LPFALQWILPVPLALGIFFAP) threads the bilayer. Residues 292–363 (ESPWWLVKKG…EDKINRRRTR (72 aa)) are Cytoplasmic-facing. The chain crosses the membrane as a helical span at residues 364–384 (ITCLCWAGQATCGSILIGYST). The Extracellular segment spans residues 385 to 397 (YFYEKAGVSTEMS). Residues 398-418 (FTFSIIQYCLGICATFLSWWA) form a helical membrane-spanning segment. Over 419–426 (SKYFGRYD) the chain is Cytoplasmic. The chain crosses the membrane as a helical span at residues 427-447 (LYAFGLAFQTIVFFIIGGLGC). Over 448–459 (SSTHGSKMGSGS) the chain is Extracellular. A helical transmembrane segment spans residues 460-480 (LLMAVAFFYNLGIAPVVFCLV). Residues 481–492 (SEMPSSRLRTKT) are Cytoplasmic-facing. A helical membrane pass occupies residues 493–513 (IILARNTYNVVSIICSVLILY). At 514 to 525 (QLNSKKWNWGAK) the chain is on the extracellular side. Residues 526–546 (SGFFWGVLCFCTLIWAVVDLP) traverse the membrane as a helical segment. At 547 to 609 (ETAGKTFVEI…QRNSNVSHHL (63 aa)) the chain is on the cytoplasmic side.

This sequence belongs to the major facilitator superfamily. Sugar transporter (TC 2.A.1.1) family.

It localises to the cell membrane. High-affinity uptake of maltose and maltotriose. Also transports alpha-methylglucoside, glucose and turanose but not melezitose or trehalose. The polypeptide is Alpha-glucosides permease MPH2 (MPH2) (Saccharomyces cerevisiae (strain ATCC 204508 / S288c) (Baker's yeast)).